The primary structure comprises 303 residues: Oxygen-dependent coproporphyrinogen-III oxidase (303 aa).

Ser93 is a binding site for substrate. A divalent metal cation-binding residues include His97 and His107. The Proton donor role is filled by His107. 109–111 provides a ligand contact to substrate; it reads NVR. A divalent metal cation-binding residues include His149 and His179. The interval 244 to 279 is important for dimerization; that stretch reads YVEFNLVFDRGTLFGLQSGGRTESILLSMPPMAQWR. Residue 262–264 coordinates substrate; that stretch reads GGR.

This sequence belongs to the aerobic coproporphyrinogen-III oxidase family. In terms of assembly, homodimer. A divalent metal cation is required as a cofactor.

Its subcellular location is the cytoplasm. It catalyses the reaction coproporphyrinogen III + O2 + 2 H(+) = protoporphyrinogen IX + 2 CO2 + 2 H2O. Its pathway is porphyrin-containing compound metabolism; protoporphyrin-IX biosynthesis; protoporphyrinogen-IX from coproporphyrinogen-III (O2 route): step 1/1. Involved in the heme biosynthesis. Catalyzes the aerobic oxidative decarboxylation of propionate groups of rings A and B of coproporphyrinogen-III to yield the vinyl groups in protoporphyrinogen-IX. The sequence is that of Oxygen-dependent coproporphyrinogen-III oxidase from Bordetella petrii (strain ATCC BAA-461 / DSM 12804 / CCUG 43448).